A 332-amino-acid chain; its full sequence is Ferredoxin--NADP reductase (332 aa).

FAD is bound by residues Glu-36, Gln-44, Tyr-49, Val-91, Phe-124, and Thr-327.

Belongs to the ferredoxin--NADP reductase type 2 family. As to quaternary structure, homodimer. FAD is required as a cofactor.

The catalysed reaction is 2 reduced [2Fe-2S]-[ferredoxin] + NADP(+) + H(+) = 2 oxidized [2Fe-2S]-[ferredoxin] + NADPH. This is Ferredoxin--NADP reductase from Streptococcus thermophilus (strain CNRZ 1066).